A 404-amino-acid chain; its full sequence is MARRLSILKQPIFSTFNNHLIDYPTPSNISYWWGFGSLAGLCLVIQILTGVFLAMHYTPHVDLAFLSVEHIMRDVKGGWLLRYMHANGASMFFIVVYLHFFRGLYYGSYASPRELVWCLGVVILLLMIVTAFIGYVLPWGQMSFWGATVITSLASAIPVVGDTIVTWLWGGFSVDNATLNRFFSLHYLLPFIIAGASILHLAALHQYGSNNPLGINSSVDKIAFYPYIYVKDLVGWVAFAIFFSIFVFYAPNVLGHPDNYIPANPMSTPAHIVPEWYFLPVYAILRSIPNKLGGVAAIGLVFVSLLALPFINTSYVRSSSFRPIHQKFFWLLVADCLLLGWIGCQPVEAPYVTIGQIASVGFFFYFAITPILGKCEARLIKNSNACEARSVLASFLTSIGLLWW.

4 helical membrane passes run 35–55, 79–101, 116–136, and 182–202; these read FGSL…FLAM, WLLR…LHFF, VWCL…IGYV, and FFSL…LHLA. 2 residues coordinate heme b: H85 and H99. Residues H186 and H200 each coordinate heme b. H205 contacts a ubiquinone. Helical transmembrane passes span 228–248, 292–312, 324–344, and 351–370; these read IYVK…IFVF, LGGV…PFIN, IHQK…WIGC, and YVTI…AITP.

It belongs to the cytochrome b family. In terms of assembly, the main subunits of complex b-c1 are: cytochrome b, cytochrome c1 and the Rieske protein. Requires heme b as cofactor.

Its subcellular location is the mitochondrion inner membrane. Its function is as follows. Component of the ubiquinol-cytochrome c reductase complex (complex III or cytochrome b-c1 complex) that is part of the mitochondrial respiratory chain. The b-c1 complex mediates electron transfer from ubiquinol to cytochrome c. Contributes to the generation of a proton gradient across the mitochondrial membrane that is then used for ATP synthesis. The polypeptide is Cytochrome b (MT-CYB) (Marchantia polymorpha (Common liverwort)).